A 338-amino-acid chain; its full sequence is MKVLGIETSCDDCCIAVVENGIHILSNIKLNQKEHKKYYGVVPEIASRLHTEAIMSVCIKALKKANTKISEIDLIAVTSRPGLIGSLIVGLNFAKGLAISLKKPIICIDHILAHLYAPLMSSKIEYPFISLLLSGGHTLIAKQKNFDDVEILGKTLDDSCGEAFDKVAKHYNMGFPGGPNIEQISKNGDENTFKFPVTTFRKKENWYDFSYSGLKTACIHQLEKFKSKDNPTTKNNIAASFQKAAFENLITPLRRAIKDTQINKLVIAGGVASNLYLREKINKLKIQTYYPPLDLCTDNGAMIAGLGFNMYLKYGESPIETDVNSRIENYKNQYRRRK.

Fe cation is bound by residues His110 and His114. Residues 132–136 (LLSGG), Asp165, Gly178, and Asn274 each bind substrate. Asp298 is a binding site for Fe cation.

It belongs to the KAE1 / TsaD family. Fe(2+) serves as cofactor.

The protein localises to the cytoplasm. It carries out the reaction L-threonylcarbamoyladenylate + adenosine(37) in tRNA = N(6)-L-threonylcarbamoyladenosine(37) in tRNA + AMP + H(+). Its function is as follows. Required for the formation of a threonylcarbamoyl group on adenosine at position 37 (t(6)A37) in tRNAs that read codons beginning with adenine. Is involved in the transfer of the threonylcarbamoyl moiety of threonylcarbamoyl-AMP (TC-AMP) to the N6 group of A37, together with TsaE and TsaB. TsaD likely plays a direct catalytic role in this reaction. The sequence is that of tRNA N6-adenosine threonylcarbamoyltransferase from Borrelia garinii subsp. bavariensis (strain ATCC BAA-2496 / DSM 23469 / PBi) (Borreliella bavariensis).